Consider the following 203-residue polypeptide: Small ribosomal subunit protein uS4 (203 aa).

One can recognise an S4 RNA-binding domain in the interval 93–154; sequence CRFDNVVFRA…KSRNMDAVRN (62 aa).

This sequence belongs to the universal ribosomal protein uS4 family. In terms of assembly, part of the 30S ribosomal subunit. Contacts protein S5. The interaction surface between S4 and S5 is involved in control of translational fidelity.

One of the primary rRNA binding proteins, it binds directly to 16S rRNA where it nucleates assembly of the body of the 30S subunit. Functionally, with S5 and S12 plays an important role in translational accuracy. In Chloroherpeton thalassium (strain ATCC 35110 / GB-78), this protein is Small ribosomal subunit protein uS4.